Reading from the N-terminus, the 109-residue chain is Putative membrane protein insertion efficiency factor (109 aa).

The protein belongs to the UPF0161 family.

It is found in the cell inner membrane. Functionally, could be involved in insertion of integral membrane proteins into the membrane. The polypeptide is Putative membrane protein insertion efficiency factor (Rhodopseudomonas palustris (strain BisA53)).